A 335-amino-acid chain; its full sequence is Zinc-type alcohol dehydrogenase-like protein SAS2087 (335 aa).

The protein belongs to the zinc-containing alcohol dehydrogenase family. Quinone oxidoreductase subfamily.

The chain is Zinc-type alcohol dehydrogenase-like protein SAS2087 from Staphylococcus aureus (strain MSSA476).